A 46-amino-acid polypeptide reads, in one-letter code: Lantibiotic streptin (46 aa).

Residues Met1–Val24 constitute a propeptide that is removed on maturation.

Belongs to the type A lantibiotic family. Post-translationally, maturation of lantibiotics involves the enzymatic conversion of Thr, and Ser into dehydrated AA and the formation of thioether bonds with cysteine. This is followed by membrane translocation and cleavage of the modified precursor.

Functionally, lanthionine-containing peptide antibiotic (lantibiotic) active on certain Gram-positive bacteria. The bactericidal activity of lantibiotics is based on depolarization of energized bacterial cytoplasmic membranes, initiated by the formation of aqueous transmembrane pores. The chain is Lantibiotic streptin (srtA) from Streptococcus pyogenes serotype M1.